Consider the following 334-residue polypeptide: Transcription factor MYB92 (334 aa).

HTH myb-type domains lie at 9–61 (DSGL…TNYL) and 62–116 (RPDI…KKKL). 2 DNA-binding regions (H-T-H motif) span residues 37–61 (WRALPKLAGLNRCGKSCRLRWTNYL) and 89–112 (WSTIANQLPGRTDNEIKNFWNTHL).

Interacts with FBX5. Highly expressed in roots and at lower levels in stems, flowers and siliques.

Its subcellular location is the nucleus. Functionally, probable transcription factor. In Arabidopsis thaliana (Mouse-ear cress), this protein is Transcription factor MYB92.